A 225-amino-acid chain; its full sequence is UPF0758 protein BcerKBAB4_4299 (225 aa).

Positions 103–225 (SIRSPEDCAS…FVSLKEKGHI (123 aa)) constitute an MPN domain. Zn(2+)-binding residues include H174, H176, and D187. The short motif at 174-187 (HNHPSGDPAPSRED) is the JAMM motif element.

This sequence belongs to the UPF0758 family.

The polypeptide is UPF0758 protein BcerKBAB4_4299 (Bacillus mycoides (strain KBAB4) (Bacillus weihenstephanensis)).